The following is a 345-amino-acid chain: MLKKAISKLVEGKNLSESEIIEALDCIMEGKATPAQIGSFITALRIKGETIEEITGCAKVMRAKADKICPNVDYYIDTCGTGGDGTNTFNISTATAFVAAAGGVYVAKHGNRSVSSKSGSADVLEALGVNIDLDPVQVKECIEKVGIGFIYAPVFHKSMKHAAGPRKELGIRTIFNILGPLTNPSNAKGQVLGVFNPNLTELMANVLLNLGIERAMVIHGMDGMDEITTTTSTKVSEVRNNEVITYELFPENYGIALASPEDLTGGNAEENAQIIRRIFNGEKGPKRDIVVLNSAAALYVGKVVSSIEEGIGLAEEVIDSGKALQKLDEFVEFTNSFISYNEMSG.

Residues Gly80, 83–84, Thr88, 90–93, 108–116, and Ser120 contribute to the 5-phospho-alpha-D-ribose 1-diphosphate site; these read GD, NIST, and KHGNRSVSS. Position 80 (Gly80) interacts with anthranilate. Ser92 is a Mg(2+) binding site. Asn111 is a binding site for anthranilate. An anthranilate-binding site is contributed by Arg166. Mg(2+) contacts are provided by Asp225 and Glu226.

The protein belongs to the anthranilate phosphoribosyltransferase family. Homodimer. Requires Mg(2+) as cofactor.

The catalysed reaction is N-(5-phospho-beta-D-ribosyl)anthranilate + diphosphate = 5-phospho-alpha-D-ribose 1-diphosphate + anthranilate. It functions in the pathway amino-acid biosynthesis; L-tryptophan biosynthesis; L-tryptophan from chorismate: step 2/5. Catalyzes the transfer of the phosphoribosyl group of 5-phosphorylribose-1-pyrophosphate (PRPP) to anthranilate to yield N-(5'-phosphoribosyl)-anthranilate (PRA). In Acetivibrio thermocellus (strain ATCC 27405 / DSM 1237 / JCM 9322 / NBRC 103400 / NCIMB 10682 / NRRL B-4536 / VPI 7372) (Clostridium thermocellum), this protein is Anthranilate phosphoribosyltransferase.